A 463-amino-acid chain; its full sequence is uncharacterized protein (463 aa).

Helical transmembrane passes span 6–26, 31–51, 60–80, 101–123, 130–152, 189–209, 242–262, 269–289, 304–324, 413–433, and 443–463; these read ILPVHVLYVFFIGAIILFMLL, TFISLFGIFIISLWASHSLSA, FIYAAGELLPTIFIICFIVSM, VRGPVTAYWLIGGLMFAISLFFW, LIGAVLLPAAARAGLTPLAAAMA, ASIPLVLIMGVTTTTAAFIMI, SILAFLIPLAFLADIACMLLF, ATALIGGSAICILFTVHFFVY, GFKFGFKVFGPVIPIAAFFYL, AIWVGGGTLVPWALIPAAAIC, and KNFIPVAIGLLVTTLAAVMML.

The protein localises to the cell membrane. This is an uncharacterized protein from Bacillus subtilis (strain 168).